The primary structure comprises 63 residues: Small ribosomal subunit protein bS21 (63 aa).

The protein belongs to the bacterial ribosomal protein bS21 family.

This is Small ribosomal subunit protein bS21 from Azobacteroides pseudotrichonymphae genomovar. CFP2.